The following is a 422-amino-acid chain: Proline--tRNA ligase (422 aa).

It belongs to the class-II aminoacyl-tRNA synthetase family. ProS type 2 subfamily. Homodimer.

The protein localises to the cytoplasm. The enzyme catalyses tRNA(Pro) + L-proline + ATP = L-prolyl-tRNA(Pro) + AMP + diphosphate. In terms of biological role, catalyzes the attachment of proline to tRNA(Pro) in a two-step reaction: proline is first activated by ATP to form Pro-AMP and then transferred to the acceptor end of tRNA(Pro). This chain is Proline--tRNA ligase, found in Wolbachia pipientis wMel.